A 172-amino-acid chain; its full sequence is Shikimate kinase (172 aa).

8–15 (GARASGKT) contributes to the ATP binding site.

It belongs to the shikimate kinase family.

The protein localises to the cytoplasm. It carries out the reaction shikimate + ATP = 3-phosphoshikimate + ADP + H(+). Its pathway is metabolic intermediate biosynthesis; chorismate biosynthesis; chorismate from D-erythrose 4-phosphate and phosphoenolpyruvate: step 5/7. The polypeptide is Shikimate kinase (Oleidesulfovibrio alaskensis (strain ATCC BAA-1058 / DSM 17464 / G20) (Desulfovibrio alaskensis)).